The primary structure comprises 427 residues: 3-phosphoshikimate 1-carboxyvinyltransferase (427 aa).

3-phosphoshikimate contacts are provided by Lys-20, Ser-21, and Arg-25. Residue Lys-20 participates in phosphoenolpyruvate binding. 2 residues coordinate phosphoenolpyruvate: Gly-92 and Arg-120. The 3-phosphoshikimate site is built by Ser-166, Gln-168, Asp-312, and Lys-339. Position 168 (Gln-168) interacts with phosphoenolpyruvate. The active-site Proton acceptor is Asp-312. Phosphoenolpyruvate is bound by residues Arg-343 and Arg-385.

This sequence belongs to the EPSP synthase family. As to quaternary structure, monomer.

The protein resides in the cytoplasm. The catalysed reaction is 3-phosphoshikimate + phosphoenolpyruvate = 5-O-(1-carboxyvinyl)-3-phosphoshikimate + phosphate. It participates in metabolic intermediate biosynthesis; chorismate biosynthesis; chorismate from D-erythrose 4-phosphate and phosphoenolpyruvate: step 6/7. Catalyzes the transfer of the enolpyruvyl moiety of phosphoenolpyruvate (PEP) to the 5-hydroxyl of shikimate-3-phosphate (S3P) to produce enolpyruvyl shikimate-3-phosphate and inorganic phosphate. This is 3-phosphoshikimate 1-carboxyvinyltransferase from Streptococcus pneumoniae (strain 70585).